Consider the following 206-residue polypeptide: Probable thymidylate kinase (206 aa).

10-17 is an ATP binding site; that stretch reads GIDGSGKS.

The protein belongs to the thymidylate kinase family.

The catalysed reaction is dTMP + ATP = dTDP + ADP. The sequence is that of Probable thymidylate kinase from Methanosarcina acetivorans (strain ATCC 35395 / DSM 2834 / JCM 12185 / C2A).